Consider the following 179-residue polypeptide: Phospholipase A2 (179 aa).

A signal peptide spans 1–21 (MHALRSSVLALWLCLHVSVRA). Residues 22–39 (WMTYRSANGLDEYEPEDR) constitute a propeptide that is removed on maturation. The Ca(2+) site is built by Trp-47, Gly-49, and Gly-51. Cystine bridges form between Cys-48–Cys-70, Cys-69–Cys-109, Cys-76–Cys-102, Cys-100–Cys-133, and Cys-142–Cys-150. The active site involves His-73. Residue Asp-74 participates in Ca(2+) binding. Asp-103 is an active-site residue. N-linked (GlcNAc...) asparagine glycosylation is present at Asn-112.

The cofactor is Ca(2+). As to expression, expressed by the venom gland.

The protein resides in the secreted. It catalyses the reaction a 1,2-diacyl-sn-glycero-3-phosphocholine + H2O = a 1-acyl-sn-glycero-3-phosphocholine + a fatty acid + H(+). In terms of biological role, PLA2 catalyzes the calcium-dependent hydrolysis of the 2-acyl groups in 3-sn-phosphoglycerides. The sequence is that of Phospholipase A2 from Xylocopa appendiculata circumvolans (Japanese carpenter bee).